The sequence spans 280 residues: Beta-glucosyl-HMC-alpha-glucosyl-transferase (280 aa).

The protein operates within genetic information processing; DNA modification. Its function is as follows. Transfers a gentiobiosyl-group on a hydroxymethylcytosine residue in DNA. Is involved in a DNA modification process to protects the phage genome against its own nucleases and the host restriction endonuclease system. This chain is Beta-glucosyl-HMC-alpha-glucosyl-transferase, found in Enterobacteria phage T2 (Bacteriophage T2).